The following is a 244-amino-acid chain: MHTPFIVALDFPSKQEVERFLRPFAGTPLFVKVGMELYYQEGPAIVAFLKEQGHAVFLDLKLHDIPNTVKQAMKGLARVGADLVNVHAAGGRRMMEAAIEGLDAGTPSGRMRPRCIAVTQLTSTDERMLHEELWISRPLVETVAHYAALAKESGLDGVVCSANEAAFIKERCGASFLAVTPGIRFADDAAHDQVRVVTPRKARALGSDYIVIGRSLTRAADPLRTYARLQHEWNGGERESTTPT.

Substrate-binding positions include Asp10, Lys32, 59–68 (DLKLHDIPNT), Thr122, Arg184, Gln193, Gly213, and Arg214. Lys61 (proton donor) is an active-site residue.

Belongs to the OMP decarboxylase family. Type 1 subfamily. In terms of assembly, homodimer.

It carries out the reaction orotidine 5'-phosphate + H(+) = UMP + CO2. It functions in the pathway pyrimidine metabolism; UMP biosynthesis via de novo pathway; UMP from orotate: step 2/2. Functionally, catalyzes the decarboxylation of orotidine 5'-monophosphate (OMP) to uridine 5'-monophosphate (UMP). The protein is Orotidine 5'-phosphate decarboxylase of Geobacillus kaustophilus (strain HTA426).